Reading from the N-terminus, the 277-residue chain is Uridine-cytidine kinase 1 (277 aa).

Positions 1–30 (MASAGGGGSESAAPEADRPQPRPFLIGVSG) are disordered. Position 30-38 (30-38 (GGTASGKST)) interacts with ATP. Positions 87, 115, 120, 169, 178, and 186 each coordinate substrate. D215 contributes to the ATP binding site. Positions 238–250 (RHRGGPNGRNHKR) are enriched in basic residues. Residues 238-277 (RHRGGPNGRNHKRTFPEPGDHPGVLATGKRSHLESSSRPH) are disordered. A Phosphothreonine modification is found at T251. Residues 268 to 277 (SHLESSSRPH) are compositionally biased toward basic and acidic residues.

Belongs to the uridine kinase family.

The enzyme catalyses uridine + ATP = UMP + ADP + H(+). It carries out the reaction cytidine + ATP = CMP + ADP + H(+). Its pathway is pyrimidine metabolism; CTP biosynthesis via salvage pathway; CTP from cytidine: step 1/3. It participates in pyrimidine metabolism; UMP biosynthesis via salvage pathway; UMP from uridine: step 1/1. In terms of biological role, phosphorylates uridine and cytidine to uridine monophosphate and cytidine monophosphate. Does not phosphorylate deoxyribonucleosides or purine ribonucleosides. Can use ATP or GTP as a phosphate donor. This Mus musculus (Mouse) protein is Uridine-cytidine kinase 1 (Uck1).